We begin with the raw amino-acid sequence, 312 residues long: tRNA uridine(34) hydroxylase (312 aa).

The 91-residue stretch at 147 to 237 folds into the Rhodanese domain; that stretch reads SDRNVIFIDM…GILGYVHDAN (91 aa). Residue C201 is the Cysteine persulfide intermediate of the active site.

This sequence belongs to the TrhO family.

It catalyses the reaction uridine(34) in tRNA + AH2 + O2 = 5-hydroxyuridine(34) in tRNA + A + H2O. In terms of biological role, catalyzes oxygen-dependent 5-hydroxyuridine (ho5U) modification at position 34 in tRNAs. In Buchnera aphidicola subsp. Schizaphis graminum (strain Sg), this protein is tRNA uridine(34) hydroxylase.